We begin with the raw amino-acid sequence, 86 residues long: Small ribosomal subunit protein uS15 (86 aa).

Belongs to the universal ribosomal protein uS15 family. Part of the 30S ribosomal subunit. Forms a bridge to the 50S subunit in the 70S ribosome, contacting the 23S rRNA.

One of the primary rRNA binding proteins, it binds directly to 16S rRNA where it helps nucleate assembly of the platform of the 30S subunit by binding and bridging several RNA helices of the 16S rRNA. Functionally, forms an intersubunit bridge (bridge B4) with the 23S rRNA of the 50S subunit in the ribosome. The chain is Small ribosomal subunit protein uS15 from Mycoplasma genitalium (strain ATCC 33530 / DSM 19775 / NCTC 10195 / G37) (Mycoplasmoides genitalium).